Reading from the N-terminus, the 468-residue chain is MLFMHIRTRFAPSPTGFIHLGNLRSALYPWAFARHNKGDFILRIEDTDLERSTQEAVDVIIEGMTWLGLDLDEGPIYQMQRIDRYHEVVKQMLDSGLAYPCYMSEEELNLLRDQQMANKEKPHYNGLWRPEPGKMLPPIPEGVKPVIRFKNSIGGSVIWNDAVKGQIEISNDELDDLVIARSDGTPTYNFCVVIDDMDMQITHVIRGDDHVNNTPRQINIMKALGGTPPVYAHLPTVLNDSGEKMSKRNGAMSVRDYQKAGYLPDAILNYLARLGWSHGDAEVFSKEQFVAWFDLESLGRSPAQHNPEKLLWLNHQYIQNSDPDKLAEATKPFAHALGIDTESGPNFVQVVGLLKDRANTLIEIAEGAKLFYMPTPNLSDKQVRENIPETVIPALKDLVGAISSAEPTKEGYAAAFKQVLAQHQLKMPALAMPVRYALFATTQTPAIDSVLVVMGRDEAIKRLSKVIR.

The short motif at 12 to 22 (PSPTGFIHLGN) is the 'HIGH' region element. The 'KMSKS' region motif lies at 244 to 248 (KMSKR). Lysine 247 is a binding site for ATP.

This sequence belongs to the class-I aminoacyl-tRNA synthetase family. Glutamate--tRNA ligase type 1 subfamily. In terms of assembly, monomer.

Its subcellular location is the cytoplasm. It carries out the reaction tRNA(Glu) + L-glutamate + ATP = L-glutamyl-tRNA(Glu) + AMP + diphosphate. Catalyzes the attachment of glutamate to tRNA(Glu) in a two-step reaction: glutamate is first activated by ATP to form Glu-AMP and then transferred to the acceptor end of tRNA(Glu). The protein is Glutamate--tRNA ligase of Polynucleobacter necessarius subsp. necessarius (strain STIR1).